The primary structure comprises 275 residues: Formamidopyrimidine-DNA glycosylase (275 aa).

Pro-2 acts as the Schiff-base intermediate with DNA in catalysis. Glu-3 functions as the Proton donor in the catalytic mechanism. Lys-58 (proton donor; for beta-elimination activity) is an active-site residue. His-93, Arg-111, and Arg-156 together coordinate DNA. Residues 241-275 (FVYDRAGQPCRVCNTPIRQIVQGQRSTYFCPTCQR) form an FPG-type zinc finger. The active-site Proton donor; for delta-elimination activity is Arg-265.

This sequence belongs to the FPG family. As to quaternary structure, monomer. Requires Zn(2+) as cofactor.

The enzyme catalyses Hydrolysis of DNA containing ring-opened 7-methylguanine residues, releasing 2,6-diamino-4-hydroxy-5-(N-methyl)formamidopyrimidine.. It carries out the reaction 2'-deoxyribonucleotide-(2'-deoxyribose 5'-phosphate)-2'-deoxyribonucleotide-DNA = a 3'-end 2'-deoxyribonucleotide-(2,3-dehydro-2,3-deoxyribose 5'-phosphate)-DNA + a 5'-end 5'-phospho-2'-deoxyribonucleoside-DNA + H(+). In terms of biological role, involved in base excision repair of DNA damaged by oxidation or by mutagenic agents. Acts as a DNA glycosylase that recognizes and removes damaged bases. Has a preference for oxidized purines, such as 7,8-dihydro-8-oxoguanine (8-oxoG). Has AP (apurinic/apyrimidinic) lyase activity and introduces nicks in the DNA strand. Cleaves the DNA backbone by beta-delta elimination to generate a single-strand break at the site of the removed base with both 3'- and 5'-phosphates. This Burkholderia lata (strain ATCC 17760 / DSM 23089 / LMG 22485 / NCIMB 9086 / R18194 / 383) protein is Formamidopyrimidine-DNA glycosylase.